The chain runs to 477 residues: Glycogen synthase (477 aa).

Residue lysine 15 participates in ADP-alpha-D-glucose binding.

The protein belongs to the glycosyltransferase 1 family. Bacterial/plant glycogen synthase subfamily.

It catalyses the reaction [(1-&gt;4)-alpha-D-glucosyl](n) + ADP-alpha-D-glucose = [(1-&gt;4)-alpha-D-glucosyl](n+1) + ADP + H(+). Its pathway is glycan biosynthesis; glycogen biosynthesis. Its function is as follows. Synthesizes alpha-1,4-glucan chains using ADP-glucose. This chain is Glycogen synthase, found in Salmonella typhi.